Here is a 271-residue protein sequence, read N- to C-terminus: S-adenosylmethionine decarboxylase proenzyme (271 aa).

The active-site Schiff-base intermediate with substrate; via pyruvic acid is Ser121. Ser121 carries the pyruvic acid (Ser); by autocatalysis modification. His126 serves as the catalytic Proton acceptor; for processing activity. Cys149 acts as the Proton donor; for catalytic activity in catalysis.

This sequence belongs to the prokaryotic AdoMetDC family. Type 2 subfamily. In terms of assembly, heterooctamer of four alpha and four beta chains arranged as a tetramer of alpha/beta heterodimers. Requires pyruvate as cofactor. Post-translationally, is synthesized initially as an inactive proenzyme. Formation of the active enzyme involves a self-maturation process in which the active site pyruvoyl group is generated from an internal serine residue via an autocatalytic post-translational modification. Two non-identical subunits are generated from the proenzyme in this reaction, and the pyruvate is formed at the N-terminus of the alpha chain, which is derived from the carboxyl end of the proenzyme. The post-translation cleavage follows an unusual pathway, termed non-hydrolytic serinolysis, in which the side chain hydroxyl group of the serine supplies its oxygen atom to form the C-terminus of the beta chain, while the remainder of the serine residue undergoes an oxidative deamination to produce ammonia and the pyruvoyl group blocking the N-terminus of the alpha chain.

It carries out the reaction S-adenosyl-L-methionine + H(+) = S-adenosyl 3-(methylsulfanyl)propylamine + CO2. It participates in amine and polyamine biosynthesis; S-adenosylmethioninamine biosynthesis; S-adenosylmethioninamine from S-adenosyl-L-methionine: step 1/1. Functionally, catalyzes the decarboxylation of S-adenosylmethionine to S-adenosylmethioninamine (dcAdoMet), the propylamine donor required for the synthesis of the polyamines spermine and spermidine from the diamine putrescine. This Clostridium perfringens (strain SM101 / Type A) protein is S-adenosylmethionine decarboxylase proenzyme.